Reading from the N-terminus, the 475-residue chain is MSYELVVGLEVHCQLNTNSKAFCGCSTEFGKPANTNVCPVCLALPGALPVLNRRVVEDAVKLGLATDCTVARQSILARKNYFYPDLPKGYQISQFEEPICSEGMVFVDTDEGRKNIRLVRIHIEEDAGKSIHDIGDDTFIDVNRCGVPLLEIVSYPDIRSAGEASSYLQKLRQIIKYLGISDGNMEEGSLRCDANVSVRLTGAEEYGTRTEIKNMNSFKNVEKAIEYEAKRHIDVLENGGTIFQETRLWDADRQETRSMRGKEFAHDYRYFPDPDLVPIEVDEEMLDRLKQELPELPEVRAERFVRETGIPAYDAGVLTSEREVADYFEKVVRACGDAKAASNWVMGEVLRTLKEKNIPVALFSVSPERLGGLLNLIGKGTISTTIAKQVFERMLETGDDAAAIVEKEGLAQISDTTEIETLVQDIIEANPGQVEQYRSGKTRIFGFFVGQCMKAMKGKANPVVVNEILKQKLDG.

Belongs to the GatB/GatE family. GatB subfamily. Heterotrimer of A, B and C subunits.

The catalysed reaction is L-glutamyl-tRNA(Gln) + L-glutamine + ATP + H2O = L-glutaminyl-tRNA(Gln) + L-glutamate + ADP + phosphate + H(+). It catalyses the reaction L-aspartyl-tRNA(Asn) + L-glutamine + ATP + H2O = L-asparaginyl-tRNA(Asn) + L-glutamate + ADP + phosphate + 2 H(+). In terms of biological role, allows the formation of correctly charged Asn-tRNA(Asn) or Gln-tRNA(Gln) through the transamidation of misacylated Asp-tRNA(Asn) or Glu-tRNA(Gln) in organisms which lack either or both of asparaginyl-tRNA or glutaminyl-tRNA synthetases. The reaction takes place in the presence of glutamine and ATP through an activated phospho-Asp-tRNA(Asn) or phospho-Glu-tRNA(Gln). The sequence is that of Aspartyl/glutamyl-tRNA(Asn/Gln) amidotransferase subunit B from Chlorobium phaeobacteroides (strain BS1).